Consider the following 337-residue polypeptide: Phenylpyruvate C(3)-methyltransferase (337 aa).

This sequence belongs to the methyltransferase superfamily.

The catalysed reaction is 3-phenylpyruvate + S-adenosyl-L-methionine = (3S)-2-oxo-3-phenylbutanoate + S-adenosyl-L-homocysteine + H(+). Its pathway is antibiotic biosynthesis. S-adenosyl-L-methionine-dependent methyltransferase involved in synthesis of the nonproteinogenic amino acid (2S,3S)-beta-methyl-phenylalanine, a building block of the antibiotic mannopeptimycin. The sequence is that of Phenylpyruvate C(3)-methyltransferase (mppJ) from Streptomyces hygroscopicus.